Reading from the N-terminus, the 61-residue chain is Small ribosomal subunit protein uS14 (61 aa).

The Zn(2+) site is built by Cys-24, Cys-27, Cys-40, and Cys-43.

The protein belongs to the universal ribosomal protein uS14 family. Zinc-binding uS14 subfamily. In terms of assembly, part of the 30S ribosomal subunit. Contacts proteins S3 and S10. It depends on Zn(2+) as a cofactor.

In terms of biological role, binds 16S rRNA, required for the assembly of 30S particles and may also be responsible for determining the conformation of the 16S rRNA at the A site. The protein is Small ribosomal subunit protein uS14 of Alkaliphilus metalliredigens (strain QYMF).